Here is a 114-residue protein sequence, read N- to C-terminus: Putative toxin HigB3 (114 aa).

Belongs to the mycobacterial HigB family.

Its function is as follows. Putative toxic component of a type II toxin-antitoxin (TA) system. Its cognate antitoxin would be HigA3. Not toxic upon expression in M.smegmatis. The polypeptide is Putative toxin HigB3 (Mycobacterium tuberculosis (strain ATCC 25618 / H37Rv)).